The primary structure comprises 347 residues: GMP reductase (347 aa).

Position 108–131 (108–131 (DDFTKTRQILAMSTALRFICVDVA)) interacts with NADP(+). Residues Gly181 and Gly183 each coordinate K(+). Cys186 acts as the Thioimidate intermediate in catalysis. An NADP(+)-binding site is contributed by 216 to 239 (IVGDGGCTCPGDVAKAFGGGADFV).

It belongs to the IMPDH/GMPR family. GuaC type 1 subfamily. In terms of assembly, homotetramer.

The enzyme catalyses IMP + NH4(+) + NADP(+) = GMP + NADPH + 2 H(+). Functionally, catalyzes the irreversible NADPH-dependent deamination of GMP to IMP. It functions in the conversion of nucleobase, nucleoside and nucleotide derivatives of G to A nucleotides, and in maintaining the intracellular balance of A and G nucleotides. In Aeromonas salmonicida (strain A449), this protein is GMP reductase.